A 689-amino-acid polypeptide reads, in one-letter code: Glycine--tRNA ligase beta subunit (689 aa).

The protein belongs to the class-II aminoacyl-tRNA synthetase family. In terms of assembly, tetramer of two alpha and two beta subunits.

The protein resides in the cytoplasm. It catalyses the reaction tRNA(Gly) + glycine + ATP = glycyl-tRNA(Gly) + AMP + diphosphate. The sequence is that of Glycine--tRNA ligase beta subunit from Pectobacterium atrosepticum (strain SCRI 1043 / ATCC BAA-672) (Erwinia carotovora subsp. atroseptica).